Reading from the N-terminus, the 93-residue chain is Neutrophil cationic peptide 2 (93 aa).

The first 19 residues, 1–19, serve as a signal peptide directing secretion; it reads MRTVPLFAACLLLTLMAQA. A propeptide spanning residues 20 to 62 is cleaved from the precursor; that stretch reads EPLPRAADHSDTKMKGDREDHVAVISFWEEESTSLQDAGAGAG. Cystine bridges form between C65/C93, C67/C82, and C72/C92.

The protein belongs to the alpha-defensin family.

Its subcellular location is the secreted. Has antibiotic, anti-fungi and antiviral activity. The sequence is that of Neutrophil cationic peptide 2 from Cavia porcellus (Guinea pig).